The chain runs to 539 residues: CTP synthase (539 aa).

The interval Met-1–Phe-268 is amidoligase domain. Ser-14 is a CTP binding site. Residue Ser-14 coordinates UTP. Ser-15–Leu-20 contacts ATP. Tyr-55 is a binding site for L-glutamine. Asp-72 is a binding site for ATP. Asp-72 and Glu-142 together coordinate Mg(2+). CTP is bound by residues Asp-149–Glu-151, Lys-188–Gln-193, and Lys-224. Residues Lys-188 to Gln-193 and Lys-224 contribute to the UTP site. Residues Arg-294–Glu-532 form the Glutamine amidotransferase type-1 domain. Gly-353 is an L-glutamine binding site. The active-site Nucleophile; for glutamine hydrolysis is Cys-380. Residues Leu-381 to Gln-384, Glu-404, and Arg-460 each bind L-glutamine. Residues His-505 and Glu-507 contribute to the active site.

The protein belongs to the CTP synthase family. As to quaternary structure, homotetramer.

The enzyme catalyses UTP + L-glutamine + ATP + H2O = CTP + L-glutamate + ADP + phosphate + 2 H(+). The catalysed reaction is L-glutamine + H2O = L-glutamate + NH4(+). It catalyses the reaction UTP + NH4(+) + ATP = CTP + ADP + phosphate + 2 H(+). It functions in the pathway pyrimidine metabolism; CTP biosynthesis via de novo pathway; CTP from UDP: step 2/2. With respect to regulation, allosterically activated by GTP, when glutamine is the substrate; GTP has no effect on the reaction when ammonia is the substrate. The allosteric effector GTP functions by stabilizing the protein conformation that binds the tetrahedral intermediate(s) formed during glutamine hydrolysis. Inhibited by the product CTP, via allosteric rather than competitive inhibition. Its function is as follows. Catalyzes the ATP-dependent amination of UTP to CTP with either L-glutamine or ammonia as the source of nitrogen. Regulates intracellular CTP levels through interactions with the four ribonucleotide triphosphates. This Chlamydia trachomatis serovar L2 (strain ATCC VR-902B / DSM 19102 / 434/Bu) protein is CTP synthase.